Here is a 208-residue protein sequence, read N- to C-terminus: Large ribosomal subunit protein uL4 (208 aa).

Positions 45 to 78 (RQGTAKSKERSEMSGSTRKLGRQKGSGGARRGDI) are disordered.

Belongs to the universal ribosomal protein uL4 family. Part of the 50S ribosomal subunit.

In terms of biological role, one of the primary rRNA binding proteins, this protein initially binds near the 5'-end of the 23S rRNA. It is important during the early stages of 50S assembly. It makes multiple contacts with different domains of the 23S rRNA in the assembled 50S subunit and ribosome. Forms part of the polypeptide exit tunnel. In Azobacteroides pseudotrichonymphae genomovar. CFP2, this protein is Large ribosomal subunit protein uL4.